The following is a 68-amino-acid chain: Large ribosomal subunit protein uL29 (68 aa).

The protein belongs to the universal ribosomal protein uL29 family.

The sequence is that of Large ribosomal subunit protein uL29 from Roseobacter denitrificans (strain ATCC 33942 / OCh 114) (Erythrobacter sp. (strain OCh 114)).